The following is a 351-amino-acid chain: Biotin synthase (351 aa).

In terms of domain architecture, Radical SAM core spans 44–262; the sequence is NRVQVSTLLS…LAVARIMMPK (219 aa). [4Fe-4S] cluster contacts are provided by Cys59, Cys63, and Cys66. Residues Cys103, Cys134, Cys194, and Arg266 each coordinate [2Fe-2S] cluster.

The protein belongs to the radical SAM superfamily. Biotin synthase family. In terms of assembly, homodimer. It depends on [4Fe-4S] cluster as a cofactor. Requires [2Fe-2S] cluster as cofactor.

It catalyses the reaction (4R,5S)-dethiobiotin + (sulfur carrier)-SH + 2 reduced [2Fe-2S]-[ferredoxin] + 2 S-adenosyl-L-methionine = (sulfur carrier)-H + biotin + 2 5'-deoxyadenosine + 2 L-methionine + 2 oxidized [2Fe-2S]-[ferredoxin]. It functions in the pathway cofactor biosynthesis; biotin biosynthesis; biotin from 7,8-diaminononanoate: step 2/2. In terms of biological role, catalyzes the conversion of dethiobiotin (DTB) to biotin by the insertion of a sulfur atom into dethiobiotin via a radical-based mechanism. The polypeptide is Biotin synthase (Stutzerimonas stutzeri (strain A1501) (Pseudomonas stutzeri)).